Here is a 234-residue protein sequence, read N- to C-terminus: Sugar fermentation stimulation protein A (234 aa).

A DNA-binding region (H-T-H motif) is located at residues 201–220; that stretch reads LLSEAQNKGVEVLAYKAELS.

Belongs to the SfsA family.

In terms of biological role, binds to DNA non-specifically. Could be a regulatory factor involved in maltose metabolism. The polypeptide is Sugar fermentation stimulation protein A (Salmonella typhi).